The following is a 399-amino-acid chain: LEM domain-containing protein Bocksbeutel (399 aa).

One can recognise an LEM domain in the interval 4-48 (LSYLDTLGNKELLAKCLEHGLPGVPVTDSTRSVIIRRLKAKITGV). 3 disordered regions span residues 49 to 103 (PLNK…EQSR), 119 to 141 (SVQT…SYMV), and 233 to 287 (NSTS…SNLA). Polar residues-rich tracts occupy residues 68-77 (HGSQVTTPTS) and 89-99 (GRTSSNNNKIS). Polar residues predominate over residues 233 to 256 (NSTSYEESSTYNPKLSPISPRNTF). The chain crosses the membrane as a helical span at residues 377–397 (FYLILVVSVMLATMVYVVLTP).

It localises to the nucleus inner membrane. It is found in the cytoplasm. The protein resides in the nucleus. The protein localises to the nucleoplasm. Its subcellular location is the endoplasmic reticulum. Inner nuclear membrane protein. May have a role in maintaining the structural integrity of the nuclear lamina. During pupal development, plays essential and redundant functions with the other LEM domain proteins; MAN1 and Ote. Also has a redundant but important role with Ote in larval development. The polypeptide is LEM domain-containing protein Bocksbeutel (Drosophila melanogaster (Fruit fly)).